The primary structure comprises 246 residues: Probable transcriptional regulatory protein KPK_1906 (246 aa).

Belongs to the TACO1 family.

It is found in the cytoplasm. The polypeptide is Probable transcriptional regulatory protein KPK_1906 (Klebsiella pneumoniae (strain 342)).